Consider the following 45-residue polypeptide: Lysis protein for colicin E1 (45 aa).

The first 17 residues, Met1–Gly17, serve as a signal peptide directing secretion. A lipid anchor (N-palmitoyl cysteine) is attached at Cys18. The S-diacylglycerol cysteine moiety is linked to residue Cys18.

The protein resides in the cell outer membrane. Functionally, lysis proteins are required for both colicin release and partial cell lysis. The sequence is that of Lysis protein for colicin E1 (lys) from Escherichia coli.